The chain runs to 79 residues: Conotoxin ArMSGL-0124 (79 aa).

Positions 1 to 20 (MSRLGIMVLTLLLLVYMATS) are cleaved as a signal peptide. A propeptide spanning residues 21–44 (HQDAGEKQATQRDAINFRWKRSLT) is cleaved from the precursor. 3 cysteine pairs are disulfide-bonded: cysteine 52-cysteine 64, cysteine 56-cysteine 73, and cysteine 63-cysteine 77. Leucine 78 is subject to Leucine amide.

Belongs to the conotoxin O3 superfamily. In terms of tissue distribution, expressed by the venom duct.

The protein resides in the secreted. This Conus arenatus (Sand-dusted cone) protein is Conotoxin ArMSGL-0124.